The sequence spans 156 residues: Lipoprotein signal peptidase (156 aa).

A run of 4 helical transmembrane segments spans residues 8-28 (IYIN…KWIL), 39-59 (VFFI…SILS), 67-87 (YFLL…MIKF), and 99-119 (SLIL…GFVI). Active-site residues include Asp-120 and Asp-138. The helical transmembrane segment at 129-149 (WHFATFNIADFSIFIGMIMII) threads the bilayer.

The protein belongs to the peptidase A8 family.

It localises to the cell inner membrane. The enzyme catalyses Release of signal peptides from bacterial membrane prolipoproteins. Hydrolyzes -Xaa-Yaa-Zaa-|-(S,diacylglyceryl)Cys-, in which Xaa is hydrophobic (preferably Leu), and Yaa (Ala or Ser) and Zaa (Gly or Ala) have small, neutral side chains.. The protein operates within protein modification; lipoprotein biosynthesis (signal peptide cleavage). Its function is as follows. This protein specifically catalyzes the removal of signal peptides from prolipoproteins. The chain is Lipoprotein signal peptidase from Buchnera aphidicola subsp. Schizaphis graminum (strain Sg).